Here is a 155-residue protein sequence, read N- to C-terminus: Small ribosomal subunit protein uS7c (155 aa).

It belongs to the universal ribosomal protein uS7 family. As to quaternary structure, part of the 30S ribosomal subunit.

The protein resides in the plastid. It is found in the chloroplast. In terms of biological role, one of the primary rRNA binding proteins, it binds directly to 16S rRNA where it nucleates assembly of the head domain of the 30S subunit. The sequence is that of Small ribosomal subunit protein uS7c (rps7) from Physcomitrium patens (Spreading-leaved earth moss).